The chain runs to 565 residues: MATNFTPISSSLYVGDLLPEVSEQHLFEIFNQVGLVSNIRVCRDTNTRRSLSYAYVNYYNGADAERALDTLNNTPIRGKACRIMWSQRDPSLRKSGVGNVFIKNLDKGIDHKALYDTFSAFGNILSCKVVTDDGNSSKGFGFVHYETQESADKAIAKVNGMMINGQKVFVGPFKSSKERGQPTEVKFTNVFFKNLSEDVGPDQLKELLQQYGEITNITIMADDKGKSKGFGFANFESAEAAKNVVENENGKIFHGKPIYAGRAQKKIEREAELKHTFETKYQGVNLYIKNIDDSIDNDKLREVFSQFGTITSAIVMKDDKATTSKGFGFVCYTAPDEATRAVTEMNGRMIGTKPLYVALAQRKDIRRAQLEMQHQQKFKTGIRQQMPPTYGSGPVFFTPAPVNPQVVYQQMMPRPRNWNGQPVGVPQGQYANMNYARGQPRQNGPRQNGGQPRQNGPRPDVSGAQPIPVQQQTTLDVAQTQQAASSAESALNLQSIINLPSRDQQNVALGEHLYPLIHNSQPDLAGKITGMLLDSLPVEELFTLTQRQDLLADKIREALEVLGSN.

RRM domains are found at residues 10-88 (SSLY…WSQR), 98-175 (GNVF…PFKS), 188-265 (TNVF…RAQK), and 284-362 (VNLY…LAQR). The interval 435 to 466 (YARGQPRQNGPRQNGGQPRQNGPRPDVSGAQP) is disordered. A compositionally biased stretch (polar residues) spans 440 to 454 (PRQNGPRQNGGQPRQ). In terms of domain architecture, PABC spans 489-565 (SALNLQSIIN…REALEVLGSN (77 aa)).

This sequence belongs to the polyadenylate-binding protein type-1 family.

It is found in the cytoplasm. It localises to the nucleus. Functionally, binds the poly(A) tail of mRNA. Appears to be an important mediator of the multiple roles of the poly(A) tail in mRNA biogenesis, stability and translation. This chain is Polyadenylate-binding protein 1-A (pabpc1A), found in Dictyostelium discoideum (Social amoeba).